Consider the following 210-residue polypeptide: Coatomer subunit zeta-2 (210 aa).

Residues 1-12 (MQRPEAWPRPHP) show a composition bias toward basic and acidic residues. The segment at 1–34 (MQRPEAWPRPHPGEGAAAAQAGGPAPPARAGEPS) is disordered. Low complexity predominate over residues 13 to 34 (GEGAAAAQAGGPAPPARAGEPS).

Belongs to the adaptor complexes small subunit family. As to quaternary structure, oligomeric complex.

The protein resides in the cytoplasm. It localises to the endoplasmic reticulum-Golgi intermediate compartment membrane. Its subcellular location is the golgi apparatus membrane. The protein localises to the cytoplasmic vesicle. It is found in the COPI-coated vesicle membrane. Its function is as follows. The coatomer is a cytosolic protein complex that binds to dilysine motifs and reversibly associates with Golgi non-clathrin-coated vesicles, which further mediate biosynthetic protein transport from the ER, via the Golgi up to the trans Golgi network. Coatomer complex is required for budding from Golgi membranes, and is essential for the retrograde Golgi-to-ER transport of dilysine-tagged proteins. The zeta subunit may be involved in regulating the coat assembly and, hence, the rate of biosynthetic protein transport due to its association-dissociation properties with the coatomer complex. The sequence is that of Coatomer subunit zeta-2 (COPZ2) from Homo sapiens (Human).